The following is a 582-amino-acid chain: SUMO-activating enzyme subunit uba-2 (582 aa).

Residues Gly-20–Gly-25, Asp-44, Asn-52–Arg-55, Lys-68, Ser-91–Ile-92, and Asp-113–Arg-118 contribute to the ATP site. Positions 154 and 157 each coordinate Zn(2+). Cys-170 serves as the catalytic Glycyl thioester intermediate. Over residues Ser-204–Asn-214 the composition is skewed to acidic residues. Residues Ser-204–Gly-235 form a disordered region. A compositionally biased stretch (basic and acidic residues) spans Thr-219–Pro-231. Zn(2+)-binding residues include Cys-431 and Cys-434. The span at Phe-531–Gly-570 shows a compositional bias: basic and acidic residues. The interval Phe-531 to Ala-582 is disordered.

Belongs to the ubiquitin-activating E1 family. Heterodimer with aos-1.

Its pathway is protein modification; protein sumoylation. Functionally, the dimeric enzyme acts as an E1 ligase for smo-1. It mediates ATP-dependent activation of smo-1 and formation of a thioester with a conserved cysteine residue on uba-2. This chain is SUMO-activating enzyme subunit uba-2 (uba-2), found in Caenorhabditis elegans.